Consider the following 398-residue polypeptide: Gastric triacylglycerol lipase (398 aa).

A signal peptide spans 1–19 (MWLLLTMASLISVLGTTHG). N34 and N99 each carry an N-linked (GlcNAc...) asparagine glycan. An AB hydrolase-1 domain is found at 78–377 (PVVFLQHGLL…PFYNHLDFIW (300 aa)). The Nucleophile role is filled by S172. The cysteines at positions 246 and 255 are disulfide-linked. Residues N271 and N327 are each glycosylated (N-linked (GlcNAc...) asparagine). Residues D343 and H372 each act as charge relay system in the active site.

The protein belongs to the AB hydrolase superfamily. Lipase family.

The protein resides in the secreted. The catalysed reaction is a triacylglycerol + H2O = a diacylglycerol + a fatty acid + H(+). It carries out the reaction 1,2,3-tri-(9Z-octadecenoyl)-glycerol + H2O = 1,2-di-(9Z-octadecenoyl)-sn-glycerol + (9Z)-octadecenoate + H(+). It catalyses the reaction 1,2,3-trioctanoylglycerol + H2O = 1,2-dioctanoyl-sn-glycerol + octanoate + H(+). Its function is as follows. Catalyzes the hydrolysis of triacylglycerols to yield free fatty acids, diacylglycerol, monoacylglycerol, and glycerol. Shows a preferential hydrolysis at the sn-3 position of triacylglycerol. The chain is Gastric triacylglycerol lipase (LIPF) from Homo sapiens (Human).